A 525-amino-acid chain; its full sequence is Glutamate--cysteine ligase (525 aa).

The protein belongs to the glutamate--cysteine ligase type 1 family. Type 1 subfamily.

The catalysed reaction is L-cysteine + L-glutamate + ATP = gamma-L-glutamyl-L-cysteine + ADP + phosphate + H(+). Its pathway is sulfur metabolism; glutathione biosynthesis; glutathione from L-cysteine and L-glutamate: step 1/2. In Vibrio vulnificus (strain YJ016), this protein is Glutamate--cysteine ligase.